Reading from the N-terminus, the 565-residue chain is Acyl-CoA ligase easD (565 aa).

ATP is bound by residues 213–221 (TSGTSGKQK), 354–359 (HAYGLT), aspartate 438, arginine 457, and lysine 555. The segment at 284–354 (DMQLMLKTIE…KLRPTWKINH (71 aa)) is SBD1. Residues 355–417 (AYGLTETGVV…FNSPSCFLGY (63 aa)) form an SBD2 region.

Belongs to the ATP-dependent AMP-binding enzyme family.

The protein operates within antibiotic biosynthesis. Functionally, acyl-CoA ligase; part of the gene cluster that mediates the biosynthesis of emericellamides, secondary metabolites acting as antibiotics. The biosynthesis of emericellamides initiates from the highly reducing polyketide synthase easB which catalyzes the formation of the linear polyketide chain. EasB produces several polyketides that can be further processed by the downstream enzymes. The polyketides are released from easB as linear polyketide carboxylic acids, which are converted to CoA thioesters by the acyl-CoA ligase easD. The substrates are then loaded onto the acyltransferase easC, which shuttles them to the first thiolation (T) domain of the nonribosomal peptide synthetase easA. EasA then performs condensation of the polyketides with one glycine, two alanine, one valine and one leucine residues. A last step of cyclization leads to the production of emericellamides. The chain is Acyl-CoA ligase easD from Emericella nidulans (strain FGSC A4 / ATCC 38163 / CBS 112.46 / NRRL 194 / M139) (Aspergillus nidulans).